The following is a 393-amino-acid chain: Lipid-A-disaccharide synthase (393 aa).

It belongs to the LpxB family.

The catalysed reaction is a lipid X + a UDP-2-N,3-O-bis[(3R)-3-hydroxyacyl]-alpha-D-glucosamine = a lipid A disaccharide + UDP + H(+). Its pathway is bacterial outer membrane biogenesis; LPS lipid A biosynthesis. Functionally, condensation of UDP-2,3-diacylglucosamine and 2,3-diacylglucosamine-1-phosphate to form lipid A disaccharide, a precursor of lipid A, a phosphorylated glycolipid that anchors the lipopolysaccharide to the outer membrane of the cell. The sequence is that of Lipid-A-disaccharide synthase from Actinobacillus pleuropneumoniae serotype 7 (strain AP76).